The primary structure comprises 215 residues: Beta-crystallin A3-2 (215 aa).

The tract at residues 1–30 is N-terminal arm; that stretch reads MEIPAIQTEREDITSEKMAQINPLPVPLGP. 2 Beta/gamma crystallin 'Greek key' domains span residues 31 to 70 and 71 to 117; these read WKIT…KVEC and GAWI…RPIC. Residues 118 to 123 form a connecting peptide region; it reads SANHEE. 2 Beta/gamma crystallin 'Greek key' domains span residues 124 to 165 and 166 to 214; these read SKLV…KVQC and GAWV…RRIQ.

This sequence belongs to the beta/gamma-crystallin family. Homo/heterodimer, or complexes of higher-order. The structure of beta-crystallin oligomers seems to be stabilized through interactions between the N-terminal arms. Post-translationally, the N-terminus is blocked.

Functionally, crystallins are the dominant structural components of the vertebrate eye lens. The sequence is that of Beta-crystallin A3-2 from Aquarana catesbeiana (American bullfrog).